Here is a 417-residue protein sequence, read N- to C-terminus: Spermidine/putrescine import ATP-binding protein PotA (417 aa).

The region spanning 5–308 (IILKDLTKVF…PANRFVAQFV (304 aa)) is the ABC transporter domain. ATP is bound at residue 37–44 (GPSGCGKT). The interval 105-177 (DFNSKIKANL…TALKCKKINK (73 aa)) is insert.

This sequence belongs to the ABC transporter superfamily. Spermidine/putrescine importer (TC 3.A.1.11.1) family. In terms of assembly, the complex is composed of two ATP-binding proteins (PotA), two transmembrane proteins (PotB and PotC) and a solute-binding protein (PotD).

The protein localises to the cell membrane. It carries out the reaction ATP + H2O + polyamine-[polyamine-binding protein]Side 1 = ADP + phosphate + polyamineSide 2 + [polyamine-binding protein]Side 1.. Its function is as follows. Part of the ABC transporter complex PotABCD involved in spermidine/putrescine import. Responsible for energy coupling to the transport system. This chain is Spermidine/putrescine import ATP-binding protein PotA, found in Onion yellows phytoplasma (strain OY-M).